The following is a 501-amino-acid chain: Probable cytosol aminopeptidase (501 aa).

Mn(2+)-binding residues include K268 and D273. K280 is an active-site residue. Mn(2+) contacts are provided by D291, D350, and E352. Residue R354 is part of the active site.

The protein belongs to the peptidase M17 family. Mn(2+) is required as a cofactor.

It localises to the cytoplasm. The catalysed reaction is Release of an N-terminal amino acid, Xaa-|-Yaa-, in which Xaa is preferably Leu, but may be other amino acids including Pro although not Arg or Lys, and Yaa may be Pro. Amino acid amides and methyl esters are also readily hydrolyzed, but rates on arylamides are exceedingly low.. The enzyme catalyses Release of an N-terminal amino acid, preferentially leucine, but not glutamic or aspartic acids.. Presumably involved in the processing and regular turnover of intracellular proteins. Catalyzes the removal of unsubstituted N-terminal amino acids from various peptides. In Nitrosococcus oceani (strain ATCC 19707 / BCRC 17464 / JCM 30415 / NCIMB 11848 / C-107), this protein is Probable cytosol aminopeptidase.